The following is a 739-amino-acid chain: NAD(P)H-quinone oxidoreductase subunit 5, chloroplastic (739 aa).

The next 16 helical transmembrane spans lie at 9–29, 39–59, 89–109, 125–145, 147–167, 185–205, 224–244, 258–278, 280–300, 327–347, 354–374, 396–416, 425–445, 544–564, 603–623, and 716–736; these read WIIP…LLLV, IWAF…ADLA, IDPL…MVLI, FAYM…SNLI, IYIF…FWFT, GDFG…SFEF, LFAA…SAQF, TPIS…FLVA, LLPL…IGII, LGYI…FHLI, ALLF…VGYS, TTFF…CFWS, WLYS…TAFY, LFPM…GIPF, IYSV…YGSV, and ISSY…IYYF.

Belongs to the complex I subunit 5 family. In terms of assembly, NDH is composed of at least 16 different subunits, 5 of which are encoded in the nucleus.

Its subcellular location is the plastid. It is found in the chloroplast thylakoid membrane. It carries out the reaction a plastoquinone + NADH + (n+1) H(+)(in) = a plastoquinol + NAD(+) + n H(+)(out). It catalyses the reaction a plastoquinone + NADPH + (n+1) H(+)(in) = a plastoquinol + NADP(+) + n H(+)(out). Functionally, NDH shuttles electrons from NAD(P)H:plastoquinone, via FMN and iron-sulfur (Fe-S) centers, to quinones in the photosynthetic chain and possibly in a chloroplast respiratory chain. The immediate electron acceptor for the enzyme in this species is believed to be plastoquinone. Couples the redox reaction to proton translocation, and thus conserves the redox energy in a proton gradient. The sequence is that of NAD(P)H-quinone oxidoreductase subunit 5, chloroplastic (ndhF) from Acorus calamus (Sweet flag).